The primary structure comprises 145 residues: Copper transporter 4 (145 aa).

2 helical membrane-spanning segments follow: residues 53–73 (GMYA…EWLA) and 106–126 (YLVI…AIFG).

This sequence belongs to the copper transporter (Ctr) (TC 1.A.56) family. SLC31A subfamily. Highly expressed in roots and at lower levels in leaves, stems and flowers.

Its subcellular location is the membrane. In terms of biological role, involved in the transport of copper. This Arabidopsis thaliana (Mouse-ear cress) protein is Copper transporter 4 (COPT4).